Reading from the N-terminus, the 487-residue chain is Cysteine--tRNA ligase (487 aa).

Cys27 contacts Zn(2+). Residues 29-39 (VTVYDLCHIGH) carry the 'HIGH' region motif. Residues Cys211, His236, and Glu240 each contribute to the Zn(2+) site. A 'KMSKS' region motif is present at residues 268 to 272 (KMSKS). Lys271 provides a ligand contact to ATP.

This sequence belongs to the class-I aminoacyl-tRNA synthetase family. Monomer. The cofactor is Zn(2+).

The protein resides in the cytoplasm. The enzyme catalyses tRNA(Cys) + L-cysteine + ATP = L-cysteinyl-tRNA(Cys) + AMP + diphosphate. The chain is Cysteine--tRNA ligase from Thermodesulfovibrio yellowstonii (strain ATCC 51303 / DSM 11347 / YP87).